The following is a 404-amino-acid chain: Argininosuccinate synthase (404 aa).

Residues Ala10–Ser18 and Ala38 each bind ATP. Tyr89 lines the L-citrulline pocket. Residue Gly119 participates in ATP binding. Thr121, Asn125, and Asp126 together coordinate L-aspartate. Asn125 serves as a coordination point for L-citrulline. The L-citrulline site is built by Arg129, Ser177, Ser186, Glu262, and Tyr274.

This sequence belongs to the argininosuccinate synthase family. Type 1 subfamily. Homotetramer.

It is found in the cytoplasm. It carries out the reaction L-citrulline + L-aspartate + ATP = 2-(N(omega)-L-arginino)succinate + AMP + diphosphate + H(+). Its pathway is amino-acid biosynthesis; L-arginine biosynthesis; L-arginine from L-ornithine and carbamoyl phosphate: step 2/3. This Prochlorococcus marinus subsp. pastoris (strain CCMP1986 / NIES-2087 / MED4) protein is Argininosuccinate synthase.